The chain runs to 275 residues: Spermidine/putrescine transport system permease protein PotB (275 aa).

A helical membrane pass occupies residues 1–21; the sequence is MIVTIVGWLVLFVFLPNLMII. At 22 to 60 the chain is on the periplasmic side; that stretch reads GTSFLTRDDASFVKMVFTLDNYTRLLDPLYFEVLLHSLN. An ABC transmembrane type-1 domain is found at 55 to 261; the sequence is LLHSLNMALI…IVMGLMLLVY (207 aa). Residues 61-81 traverse the membrane as a helical segment; it reads MALIATLACLVLGYPFAWFLA. At 82–89 the chain is on the cytoplasmic side; that stretch reads KLPHKVRP. The chain crosses the membrane as a helical span at residues 90–110; that stretch reads LLLFLLIVPFWTNSLIRIYGL. Over 111 to 135 the chain is Periplasmic; that stretch reads KIFLSTKGYLNEFLLWLGVIDTPIR. The helical transmembrane segment at 136 to 156 threads the bilayer; the sequence is IMFTPSAVIIGLVYILLPFMV. At 157–187 the chain is on the cytoplasmic side; the sequence is MPLYSSIEKLDKPLLEAARDLGASKLQTFIR. A helical transmembrane segment spans residues 188–208; that stretch reads IIIPLTMPGIIAGCLLVMLPA. The Periplasmic segment spans residues 209-241; that stretch reads MGLFYVSDLMGGAKNLLIGNVIKVQFLNIRDWP. A helical membrane pass occupies residues 242–262; sequence FGAATSITLTIVMGLMLLVYW. The Cytoplasmic segment spans residues 263–275; sequence RASRLLNKKVELE.

Belongs to the binding-protein-dependent transport system permease family. CysTW subfamily.

It localises to the cell inner membrane. In terms of biological role, required for the activity of the bacterial periplasmic transport system of putrescine and spermidine. This is Spermidine/putrescine transport system permease protein PotB (potB) from Escherichia coli (strain K12).